The following is a 218-amino-acid chain: Large ribosomal subunit protein uL3 (218 aa).

This sequence belongs to the universal ribosomal protein uL3 family. In terms of assembly, part of the 50S ribosomal subunit. Forms a cluster with proteins L14 and L19.

Functionally, one of the primary rRNA binding proteins, it binds directly near the 3'-end of the 23S rRNA, where it nucleates assembly of the 50S subunit. The chain is Large ribosomal subunit protein uL3 from Mycolicibacterium gilvum (strain PYR-GCK) (Mycobacterium gilvum (strain PYR-GCK)).